The following is a 1090-amino-acid chain: UPF0507 protein EC1118_1M3_1541g (1090 aa).

One can recognise a VPS9 domain in the interval 289 to 436; it reads FSVNQLLTDF…FEDFNKNTGN (148 aa).

It belongs to the UPF0507 family.

This chain is UPF0507 protein EC1118_1M3_1541g, found in Saccharomyces cerevisiae (strain Lalvin EC1118 / Prise de mousse) (Baker's yeast).